The sequence spans 525 residues: WD repeat-containing protein JIP5 (525 aa).

WD repeat units lie at residues 28–69, 121–160, 211–251, 270–310, and 358–398; these read VFDE…RILN, RHKG…VMKK, HNGD…ESDA, QEDE…LVDQ, and RKHS…DDEE. Residues 396-525 form a disordered region; the sequence is DEEGKINESY…EHGIRKFEGL (130 aa). Positions 410–424 are enriched in acidic residues; the sequence is SDNDNGFDSDADSNS. Residues 425-435 are compositionally biased toward low complexity; that stretch reads DSESVSSSDVD. Basic and acidic residues predominate over residues 463–484; it reads SKDELLAELEKDLQSSDEDSKH. Over residues 485–501 the composition is skewed to basic residues; the sequence is YTKRTKSTQPKKLKKQK. Residues 513–525 show a composition bias toward basic and acidic residues; the sequence is QKHEHGIRKFEGL.

This sequence belongs to the WD repeat WDR55 family.

The protein resides in the nucleus. The protein localises to the nucleolus. In Kluyveromyces lactis (strain ATCC 8585 / CBS 2359 / DSM 70799 / NBRC 1267 / NRRL Y-1140 / WM37) (Yeast), this protein is WD repeat-containing protein JIP5 (JIP5).